A 2346-amino-acid chain; its full sequence is N-benzoylphenylalaninol synthetase apmA (2346 aa).

An adenylation 1 region spans residues glutamate 263–arginine 652. Residues methionine 784–arginine 860 form the Carrier 1 domain. Serine 821 bears the O-(pantetheine 4'-phosphoryl)serine mark. The tract at residues glutamine 896–leucine 1306 is condensation. The tract at residues serine 1330–arginine 1713 is adenylation 2. Positions serine 1842–leucine 1924 constitute a Carrier 2 domain. Residue serine 1883 is modified to O-(pantetheine 4'-phosphoryl)serine. Residues valine 1960–glycine 2311 form a reductase (R) domain region.

This sequence belongs to the NRP synthetase family.

It catalyses the reaction benzoate + L-phenylalanine + 2 AH2 + 2 ATP = N-benzoyl-L-phenylalaninol + 2 A + 2 AMP + 2 diphosphate + H(+). It functions in the pathway secondary metabolite biosynthesis. Functionally, nonribosomal peptide synthase; part of the gene cluster that mediates the biosynthesis of asperphenamate, a rare linear amino acid ester that exhibits antitumor activity towards a number of cell lines. The structure of asperphenamate contains two subunits, N-benzoylphenylalanine and N-benzoylphenylalaninol, which are connected by an inter-molecular ester bond. The first step of asperphenamate biosynthesis is the generation of N-benzoylphenylalaninol by the nonribosomal peptide synthase apmA. Using phenylalanine and benzoic acid as substrates, apmA catalyzes amide bond formation and tethers the intermediate into the NRPS chain. Then, the terminal R domain of apmA catalyzes the reduction reaction to get the shunt product N-benzoylphenylalaninol. Subsequently, the nonribosomal peptide synthase apmB activates the same substrates as does apmA (phenylalanine and benzoic acid) to produce N-benzoylphenylalanine before condensing N-benzoylphenylalanine and N-benzoylphenylalaninol to release asperphenamate. The chain is N-benzoylphenylalaninol synthetase apmA from Penicillium brevicompactum.